Reading from the N-terminus, the 236-residue chain is Large ribosomal subunit protein uL1 (236 aa).

It belongs to the universal ribosomal protein uL1 family. In terms of assembly, part of the 50S ribosomal subunit.

Functionally, binds directly to 23S rRNA. The L1 stalk is quite mobile in the ribosome, and is involved in E site tRNA release. Protein L1 is also a translational repressor protein, it controls the translation of the L11 operon by binding to its mRNA. This Corynebacterium jeikeium (strain K411) protein is Large ribosomal subunit protein uL1.